We begin with the raw amino-acid sequence, 481 residues long: GTPase Der (481 aa).

EngA-type G domains are found at residues P47–S210 and R221–E394. GTP-binding positions include G53–S60, D100–W104, N162–D165, G227–S234, D274–I278, and N339–D342. A KH-like domain is found at T395 to E477.

This sequence belongs to the TRAFAC class TrmE-Era-EngA-EngB-Septin-like GTPase superfamily. EngA (Der) GTPase family. In terms of assembly, associates with the 50S ribosomal subunit.

GTPase that plays an essential role in the late steps of ribosome biogenesis. In Leifsonia xyli subsp. xyli (strain CTCB07), this protein is GTPase Der.